Reading from the N-terminus, the 803-residue chain is Lon protease (803 aa).

Residues 9–202 (MPVLPLRDVV…YLLGMMESEA (194 aa)) form the Lon N-terminal domain. 356–363 (GPPGVGKT) provides a ligand contact to ATP. Positions 592–773 (QNRIGEVTGL…DEVLGFALEN (182 aa)) constitute a Lon proteolytic domain. Residues serine 679 and lysine 722 contribute to the active site.

The protein belongs to the peptidase S16 family. Homohexamer. Organized in a ring with a central cavity.

It is found in the cytoplasm. The catalysed reaction is Hydrolysis of proteins in presence of ATP.. Its function is as follows. ATP-dependent serine protease that mediates the selective degradation of mutant and abnormal proteins as well as certain short-lived regulatory proteins. Required for cellular homeostasis and for survival from DNA damage and developmental changes induced by stress. Degrades polypeptides processively to yield small peptide fragments that are 5 to 10 amino acids long. Binds to DNA in a double-stranded, site-specific manner. The sequence is that of Lon protease from Haemophilus influenzae (strain ATCC 51907 / DSM 11121 / KW20 / Rd).